The sequence spans 442 residues: Probable D-serine dehydratase (442 aa).

N6-(pyridoxal phosphate)lysine is present on lysine 115.

Belongs to the serine/threonine dehydratase family. DsdA subfamily. Pyridoxal 5'-phosphate is required as a cofactor.

It carries out the reaction D-serine = pyruvate + NH4(+). This chain is Probable D-serine dehydratase, found in Halalkalibacterium halodurans (strain ATCC BAA-125 / DSM 18197 / FERM 7344 / JCM 9153 / C-125) (Bacillus halodurans).